The following is a 632-amino-acid chain: 1-deoxy-D-xylulose-5-phosphate synthase (632 aa).

Thiamine diphosphate-binding positions include H74 and 115-117; that span reads AHS. D146 contributes to the Mg(2+) binding site. Thiamine diphosphate contacts are provided by residues 147–148, N176, Y283, and E365; that span reads GA. Position 176 (N176) interacts with Mg(2+).

This sequence belongs to the transketolase family. DXPS subfamily. As to quaternary structure, homodimer. Requires Mg(2+) as cofactor. The cofactor is thiamine diphosphate.

It catalyses the reaction D-glyceraldehyde 3-phosphate + pyruvate + H(+) = 1-deoxy-D-xylulose 5-phosphate + CO2. It functions in the pathway metabolic intermediate biosynthesis; 1-deoxy-D-xylulose 5-phosphate biosynthesis; 1-deoxy-D-xylulose 5-phosphate from D-glyceraldehyde 3-phosphate and pyruvate: step 1/1. Functionally, catalyzes the acyloin condensation reaction between C atoms 2 and 3 of pyruvate and glyceraldehyde 3-phosphate to yield 1-deoxy-D-xylulose-5-phosphate (DXP). This is 1-deoxy-D-xylulose-5-phosphate synthase from Paraburkholderia phymatum (strain DSM 17167 / CIP 108236 / LMG 21445 / STM815) (Burkholderia phymatum).